We begin with the raw amino-acid sequence, 312 residues long: Signal peptidase I (312 aa).

The helical transmembrane segment at 7 to 27 threads the bilayer; it reads IFLLTSTFFTGILWIIDHILL. Topologically, residues 28–63 are cytoplasmic; sequence IKNYFYNKKKTKNNNTILINKVILENKKCFFRSLSS. A helical transmembrane segment spans residues 64-84; sequence LFPTFFIVFIIRSFIYEPFQI. Topologically, residues 85-312 are extracellular; the sequence is PSGSMMPTLL…IRIKRIGNIY (228 aa). Active-site residues include Ser88 and Lys142.

It belongs to the peptidase S26 family.

It localises to the cell membrane. The catalysed reaction is Cleavage of hydrophobic, N-terminal signal or leader sequences from secreted and periplasmic proteins.. The protein is Signal peptidase I (lepB) of Buchnera aphidicola subsp. Schizaphis graminum (strain Sg).